Here is an 86-residue protein sequence, read N- to C-terminus: Small ribosomal subunit protein bS20 (86 aa).

The disordered stretch occupies residues 1–25; it reads MANIKSQIKRIRTNEKARQRNKAYK. A compositionally biased stretch (basic and acidic residues) spans 12–25; it reads RTNEKARQRNKAYK.

This sequence belongs to the bacterial ribosomal protein bS20 family.

Binds directly to 16S ribosomal RNA. The polypeptide is Small ribosomal subunit protein bS20 (Beutenbergia cavernae (strain ATCC BAA-8 / DSM 12333 / CCUG 43141 / JCM 11478 / NBRC 16432 / NCIMB 13614 / HKI 0122)).